The primary structure comprises 894 residues: Bifunctional enzyme RhaA/RhaB (894 aa).

The interval 1–465 is rhamnulokinase; that stretch reads MGEYRLAVDI…TAFPVTYFLP (465 aa). The interval 466–894 is L-rhamnose isomerase; the sequence is QRSESHVSSR…KRESEKAKQR (429 aa). H730, D762, and D764 together coordinate Mn(2+).

The protein in the N-terminal section; belongs to the rhamnulokinase family. This sequence in the C-terminal section; belongs to the rhamnose isomerase family. Mn(2+) serves as cofactor.

It is found in the cytoplasm. The enzyme catalyses L-rhamnulose + ATP = L-rhamnulose 1-phosphate + ADP + H(+). It carries out the reaction L-rhamnopyranose = L-rhamnulose. It functions in the pathway carbohydrate degradation; L-rhamnose degradation; glycerone phosphate from L-rhamnose: step 1/3. It participates in carbohydrate degradation; L-rhamnose degradation; glycerone phosphate from L-rhamnose: step 2/3. The polypeptide is Bifunctional enzyme RhaA/RhaB (rhaAB) (Shouchella clausii (strain KSM-K16) (Alkalihalobacillus clausii)).